Reading from the N-terminus, the 112-residue chain is SRA stem-loop-interacting RNA-binding protein, mitochondrial (112 aa).

The residue at position 15 (Ser-15) is a Phosphoserine. Residues 19-98 (PIAFVRKIPW…IHVQAQRAKA (80 aa)) enclose the RRM domain. Thr-104 is subject to Phosphothreonine. Ser-105 carries the phosphoserine modification.

It is found in the mitochondrion. Its subcellular location is the nucleus. Its function is as follows. RNA-binding protein that acts as a nuclear receptor corepressor. Probably acts by binding the SRA RNA, and repressing the SRA-mediated nuclear receptor coactivation. Binds the STR7 loop of SRA RNA. Also able to repress glucocorticoid (GR), androgen (AR), thyroid (TR) and VDR-mediated transactivation. This Mus musculus (Mouse) protein is SRA stem-loop-interacting RNA-binding protein, mitochondrial (Slirp).